The chain runs to 778 residues: GRIP and coiled-coil domain-containing protein 1 (778 aa).

Residues 13 to 61 (SKKDLLETIETQKKQLLQYQARLKDVVRAYKSLLKEKEALEASIKVLSV) are a coiled coil. Disordered stretches follow at residues 70–157 (SGVQ…MDKR), 186–208 (YLADKKKMKQDLEDANKKAEEER), and 617–638 (GRRSPVGGVGGGGLGDPADTAS). The segment covering 83 to 93 (VDDRCSTHSED) has biased composition (basic and acidic residues). Composition is skewed to low complexity over residues 94-109 (STGTATSLDTAASLTS) and 133-152 (ASGSESGVSSSSGDGPSAGS). Positions 152 to 702 (SEMDKRVHQL…EEGERHREEV (551 aa)) form a coiled coil. One can recognise a GRIP domain in the interval 716-766 (QSREGANLEYLKNIIYRFLTLPDSLGRQQTLTAILTILHFSPEEKQVLMRL).

The protein localises to the cytoplasm. It is found in the golgi apparatus membrane. Probably involved in maintaining Golgi structure. This Mus musculus (Mouse) protein is GRIP and coiled-coil domain-containing protein 1 (Gcc1).